Here is a 318-residue protein sequence, read N- to C-terminus: L-lactate dehydrogenase (318 aa).

NAD(+) contacts are provided by residues valine 18, aspartate 39, lysine 44, tyrosine 69, and 83–84 (GA). Positions 86 and 92 each coordinate substrate. NAD(+) is bound by residues serine 105, 122–124 (VSN), and serine 147. 124 to 127 (NPVD) provides a ligand contact to substrate. 152-155 (DTSR) lines the substrate pocket. The active-site Proton acceptor is the histidine 179. Phosphotyrosine is present on tyrosine 225. Residue threonine 234 participates in substrate binding.

It belongs to the LDH/MDH superfamily. LDH family. As to quaternary structure, homotetramer.

The protein localises to the cytoplasm. It catalyses the reaction (S)-lactate + NAD(+) = pyruvate + NADH + H(+). It functions in the pathway fermentation; pyruvate fermentation to lactate; (S)-lactate from pyruvate: step 1/1. Catalyzes the conversion of lactate to pyruvate. The sequence is that of L-lactate dehydrogenase from Clostridium botulinum (strain Loch Maree / Type A3).